The chain runs to 38 residues: Photosystem II reaction center protein L (38 aa).

The chain crosses the membrane as a helical span at residues S17–F37.

This sequence belongs to the PsbL family. As to quaternary structure, PSII is composed of 1 copy each of membrane proteins PsbA, PsbB, PsbC, PsbD, PsbE, PsbF, PsbH, PsbI, PsbJ, PsbK, PsbL, PsbM, PsbT, PsbX, PsbY, PsbZ, Psb30/Ycf12, at least 3 peripheral proteins of the oxygen-evolving complex and a large number of cofactors. It forms dimeric complexes.

It localises to the plastid. It is found in the chloroplast thylakoid membrane. Functionally, one of the components of the core complex of photosystem II (PSII). PSII is a light-driven water:plastoquinone oxidoreductase that uses light energy to abstract electrons from H(2)O, generating O(2) and a proton gradient subsequently used for ATP formation. It consists of a core antenna complex that captures photons, and an electron transfer chain that converts photonic excitation into a charge separation. This subunit is found at the monomer-monomer interface and is required for correct PSII assembly and/or dimerization. The sequence is that of Photosystem II reaction center protein L from Oltmannsiellopsis viridis (Marine flagellate).